The chain runs to 209 residues: D-aminoacyl-tRNA deacylase 1 (209 aa).

The Mg(2+) site is built by Val-4, Gln-6, and Cys-28. Positions 139–140 (GP) match the Gly-cisPro motif, important for rejection of L-amino acids motif. The tract at residues 142-209 (TIELESPAPG…EGDVSSEREP (68 aa)) is disordered. Composition is skewed to basic and acidic residues over residues 159–170 (QLSKLEKQQQRK) and 181–194 (SSKE…EDRS). Ser-197, Ser-204, and Ser-205 each carry phosphoserine.

The protein belongs to the DTD family. As to quaternary structure, homodimer. Interacts with CDC45 and TOPBP1. In terms of processing, preferentially phosphorylated in cells arrested early in S phase. Phosphorylation in the C-terminus weakens the interaction with CDC45. In terms of tissue distribution, expressed in many adult and fetal tissues. Highest levels in testis, ovary, spleen and in adult and fetal brain.

It localises to the nucleus. It is found in the cytoplasm. It carries out the reaction glycyl-tRNA(Ala) + H2O = tRNA(Ala) + glycine + H(+). The enzyme catalyses a D-aminoacyl-tRNA + H2O = a tRNA + a D-alpha-amino acid + H(+). Its function is as follows. Possible ATPase involved in DNA replication, may facilitate loading of CDC45 onto pre-replication complexes. In terms of biological role, an aminoacyl-tRNA editing enzyme that deacylates mischarged D-aminoacyl-tRNAs. Also deacylates mischarged glycyl-tRNA(Ala), protecting cells against glycine mischarging by AlaRS. Acts via tRNA-based rather than protein-based catalysis; rejects L-amino acids rather than detecting D-amino acids in the active site. By recycling D-aminoacyl-tRNA to D-amino acids and free tRNA molecules, this enzyme counteracts the toxicity associated with the formation of D-aminoacyl-tRNA entities in vivo and helps enforce protein L-homochirality. In Homo sapiens (Human), this protein is D-aminoacyl-tRNA deacylase 1 (DTD1).